A 279-amino-acid chain; its full sequence is 3-methyl-2-oxobutanoate hydroxymethyltransferase (279 aa).

2 residues coordinate Mg(2+): Asp-43 and Asp-82. Residues 43–44 (DS), Asp-82, and Lys-112 contribute to the 3-methyl-2-oxobutanoate site. Glu-114 provides a ligand contact to Mg(2+). Glu-181 (proton acceptor) is an active-site residue.

It belongs to the PanB family. As to quaternary structure, homodecamer; pentamer of dimers. Mg(2+) serves as cofactor.

Its subcellular location is the cytoplasm. It catalyses the reaction 3-methyl-2-oxobutanoate + (6R)-5,10-methylene-5,6,7,8-tetrahydrofolate + H2O = 2-dehydropantoate + (6S)-5,6,7,8-tetrahydrofolate. Its pathway is cofactor biosynthesis; (R)-pantothenate biosynthesis; (R)-pantoate from 3-methyl-2-oxobutanoate: step 1/2. In terms of biological role, catalyzes the reversible reaction in which hydroxymethyl group from 5,10-methylenetetrahydrofolate is transferred onto alpha-ketoisovalerate to form ketopantoate. The protein is 3-methyl-2-oxobutanoate hydroxymethyltransferase of Geobacillus kaustophilus (strain HTA426).